A 329-amino-acid chain; its full sequence is Cathepsin K (329 aa).

The signal sequence occupies residues 1–15 (MWVFKFLLLPMVSFA). Positions 16-114 (LSPEEMLDTQ…TLYTPEWEGR (99 aa)) are cleaved as a propeptide — activation peptide. N-linked (GlcNAc...) asparagine glycosylation is present at N103. 2 disulfides stabilise this stretch: C136–C177 and C170–C210. The active site involves C139. Residue N213 is glycosylated (N-linked (GlcNAc...) asparagine). Cysteines 269 and 318 form a disulfide. Residues H276 and N296 contribute to the active site.

This sequence belongs to the peptidase C1 family. As to expression, predominantly expressed in bones. Expressed in thyroid epithelial cells.

The protein localises to the lysosome. The protein resides in the secreted. It is found in the apical cell membrane. The enzyme catalyses Broad proteolytic activity. With small-molecule substrates and inhibitors, the major determinant of specificity is P2, which is preferably Leu, Met &gt; Phe, and not Arg.. Its function is as follows. Thiol protease involved in osteoclastic bone resorption. Displays potent endoprotease activity against fibrinogen at acid pH. May play an important role in extracellular matrix degradation. Involved in the release of thyroid hormone thyroxine (T4) by limited proteolysis of TG/thyroglobulin in the thyroid follicle lumen. The chain is Cathepsin K (Ctsk) from Mus musculus (Mouse).